A 223-amino-acid chain; its full sequence is Proteasome subunit beta (223 aa).

The propeptide at 1–6 is removed in mature form; by autocatalysis; it reads MDTMKG. Thr7 (nucleophile) is an active-site residue.

The protein belongs to the peptidase T1B family. In terms of assembly, the 20S proteasome core is composed of 14 alpha and 14 beta subunits that assemble into four stacked heptameric rings, resulting in a barrel-shaped structure. The two inner rings, each composed of seven catalytic beta subunits, are sandwiched by two outer rings, each composed of seven alpha subunits. The catalytic chamber with the active sites is on the inside of the barrel. Has a gated structure, the ends of the cylinder being occluded by the N-termini of the alpha-subunits. Is capped at one or both ends by the proteasome regulatory ATPase, PAN.

It is found in the cytoplasm. The catalysed reaction is Cleavage of peptide bonds with very broad specificity.. With respect to regulation, the formation of the proteasomal ATPase PAN-20S proteasome complex, via the docking of the C-termini of PAN into the intersubunit pockets in the alpha-rings, triggers opening of the gate for substrate entry. Interconversion between the open-gate and close-gate conformations leads to a dynamic regulation of the 20S proteasome proteolysis activity. Functionally, component of the proteasome core, a large protease complex with broad specificity involved in protein degradation. In Methanocaldococcus vulcanius (strain ATCC 700851 / DSM 12094 / M7) (Methanococcus vulcanius), this protein is Proteasome subunit beta.